Reading from the N-terminus, the 477-residue chain is Cysteine--tRNA ligase (477 aa).

Cysteine 29 contacts Zn(2+). The short motif at proline 31–histidine 41 is the 'HIGH' region element. Zn(2+) is bound by residues cysteine 209, histidine 234, and glutamate 238. The short motif at lysine 266–serine 270 is the 'KMSKS' region element. Lysine 269 serves as a coordination point for ATP.

It belongs to the class-I aminoacyl-tRNA synthetase family. Zn(2+) is required as a cofactor.

It is found in the cytoplasm. It catalyses the reaction tRNA(Cys) + L-cysteine + ATP = L-cysteinyl-tRNA(Cys) + AMP + diphosphate. This is Cysteine--tRNA ligase (cysS) from Pyrococcus abyssi (strain GE5 / Orsay).